A 261-amino-acid chain; its full sequence is Putative cytochrome YdhU (261 aa).

Residues 25 to 45 form a helical membrane-spanning segment; it reads FWPVWLIIAGVLLVGMWLVLG. Residue His77 participates in heme b binding. 3 helical membrane-spanning segments follow: residues 81–101, 108–128, and 182–202; these read ALLF…MVGA, VAVH…FVLI, and VAYV…GLLC. Residue His111 coordinates heme b. Residues His223 and His237 each coordinate heme b. The helical transmembrane segment at 224–244 threads the bilayer; it reads FALAFISLFFIFGHLYLCTTG. A menaquinone is bound at residue His237.

Belongs to the PhsC family. It depends on heme as a cofactor.

It is found in the cell inner membrane. The sequence is that of Putative cytochrome YdhU (ydhU) from Escherichia coli (strain K12).